The chain runs to 291 residues: T-cell leukemia homeobox protein 3 (291 aa).

The tract at residues Met-1 to Arg-51 is disordered. A DNA-binding region (homeobox) is located at residues Arg-166–Thr-225.

Its subcellular location is the nucleus. This chain is T-cell leukemia homeobox protein 3 (Tlx3), found in Mus musculus (Mouse).